The following is a 226-amino-acid chain: ATP synthase F(0) complex subunit a (226 aa).

The next 6 helical transmembrane spans lie at 6–26 (FAPF…IITF), 68–88 (WTLM…LGLL), 97–117 (QLSM…IMGF), 138–158 (IPML…ALAV), 164–184 (ITAG…LSSI), and 195–215 (ILFL…YVFT).

The protein belongs to the ATPase A chain family. Component of the ATP synthase complex composed at least of ATP5F1A/subunit alpha, ATP5F1B/subunit beta, ATP5MC1/subunit c (homooctomer), MT-ATP6/subunit a, MT-ATP8/subunit 8, ATP5ME/subunit e, ATP5MF/subunit f, ATP5MG/subunit g, ATP5MK/subunit k, ATP5MJ/subunit j, ATP5F1C/subunit gamma, ATP5F1D/subunit delta, ATP5F1E/subunit epsilon, ATP5PF/subunit F6, ATP5PB/subunit b, ATP5PD/subunit d, ATP5PO/subunit OSCP. ATP synthase complex consists of a soluble F(1) head domain (subunits alpha(3) and beta(3)) - the catalytic core - and a membrane F(0) domain - the membrane proton channel (subunits c, a, 8, e, f, g, k and j). These two domains are linked by a central stalk (subunits gamma, delta, and epsilon) rotating inside the F1 region and a stationary peripheral stalk (subunits F6, b, d, and OSCP). Interacts with DNAJC30; interaction is direct.

It is found in the mitochondrion inner membrane. It carries out the reaction H(+)(in) = H(+)(out). Its function is as follows. Subunit a, of the mitochondrial membrane ATP synthase complex (F(1)F(0) ATP synthase or Complex V) that produces ATP from ADP in the presence of a proton gradient across the membrane which is generated by electron transport complexes of the respiratory chain. ATP synthase complex consist of a soluble F(1) head domain - the catalytic core - and a membrane F(1) domain - the membrane proton channel. These two domains are linked by a central stalk rotating inside the F(1) region and a stationary peripheral stalk. During catalysis, ATP synthesis in the catalytic domain of F(1) is coupled via a rotary mechanism of the central stalk subunits to proton translocation. With the subunit c (ATP5MC1), forms the proton-conducting channel in the F(0) domain, that contains two crucial half-channels (inlet and outlet) that facilitate proton movement from the mitochondrial intermembrane space (IMS) into the matrix. Protons are taken up via the inlet half-channel and released through the outlet half-channel, following a Grotthuss mechanism. The sequence is that of ATP synthase F(0) complex subunit a from Didelphis virginiana (North American opossum).